The primary structure comprises 653 residues: tRNA 5-methylaminomethyl-2-thiouridine biosynthesis bifunctional protein MnmC (653 aa).

Residues 1–236 form a tRNA (mnm(5)s(2)U34)-methyltransferase region; it reads MPDRLVPATL…KFAMLVGEYA (236 aa). The interval 260-653 is FAD-dependent cmnm(5)s(2)U34 oxidoreductase; the sequence is IGAGLAGCAL…IRALRGRKLG (394 aa).

It in the N-terminal section; belongs to the methyltransferase superfamily. tRNA (mnm(5)s(2)U34)-methyltransferase family. In the C-terminal section; belongs to the DAO family. FAD is required as a cofactor.

The protein localises to the cytoplasm. The catalysed reaction is 5-aminomethyl-2-thiouridine(34) in tRNA + S-adenosyl-L-methionine = 5-methylaminomethyl-2-thiouridine(34) in tRNA + S-adenosyl-L-homocysteine + H(+). Functionally, catalyzes the last two steps in the biosynthesis of 5-methylaminomethyl-2-thiouridine (mnm(5)s(2)U) at the wobble position (U34) in tRNA. Catalyzes the FAD-dependent demodification of cmnm(5)s(2)U34 to nm(5)s(2)U34, followed by the transfer of a methyl group from S-adenosyl-L-methionine to nm(5)s(2)U34, to form mnm(5)s(2)U34. This Burkholderia vietnamiensis (strain G4 / LMG 22486) (Burkholderia cepacia (strain R1808)) protein is tRNA 5-methylaminomethyl-2-thiouridine biosynthesis bifunctional protein MnmC.